A 1032-amino-acid chain; its full sequence is MRFQNPFAFRPGPVSFWTTVIYLALVIPLIYVHETVPPAPSDRSLYQGLNLTEAWLDLQTISRAFHPYNSHENDVVRQFLIDRTKEILDRNSMPYTTETIGGVDWHTRNAFVQTQDSDLNPRDEFIQSRPRGATLFDDKISNVTWTYNTARPTGTNIAKGTWMGQYFEGNNYYVYIHGKDDPEGEWWRSESAYKKFRGQGGVLVNCHFDSVSTGYGATDDGMSCVSMLQLLSYFTLQGRQPKNGIVLLFNNAEEDGLLGARAFGYSPLLHFTHTFVNLEGAGAGGRAILFRTTDLQAAKVYAKSPHPFGSVVAANAFERGVIKSATDYEIFADIFGQRGMDIAFYAPRARYHTNQDDTRHTSVNSIWHMLSAALASTERFSQITGTTFHGDRSDGKSDLVQNGKKAEGVWFDIFGSAWAVFALRGLFAWSLTLLVATPLILVAITYILARKDKYYFFSRDIKMHHDINDDPVVLGGWKGFLRFPFALVFAGALTIASTLLLAKFNPLIIYSSPYAVWSMTLSIFYFSFWLIMRGASFIRPSALHRGYVLIWLFALGWGLQVVGAVAEDRLHIAALYATVFLQSAVFLALFISLLEQFALLGKHDFAMQLHDAHQARDISSHGTDHESRPQPEEEPAQPEGDEDESEDATETTPLRANEPGYGSSTRTSFAATYRRSVADNAPSPPRMRRYQPYEHEQSWSGRLPSWTWIIQFLLLAPVPVILFGNLGLVAMSALQMTGTDGGSLLVPVLTLGIVSIFLLLPLTPFIHRVSHHVPMFLLCVFAGTFIYNLVAFPFSDSHRFKFYFQQVVDLDNGTDTVSIVGLERFSRSVIKSLPSASSQDIKCEKAVGRDLMECLYDSSSLSPHLVEGKTPRELITFETVDGTNASKGRLRIDALDSRLCYLHTSRPIYGFAVDGGAARDPRFGGFPSEGFKTIQLWRRDRDRPWTVNLYLDEHSQQADKSFEGEHKKLGDGSVVHRRADDPLEVTVRCAWSDANKPGTIPALDELLKYMPTWAAVTKKNVGLVEVRKTYKV.

Over 1 to 11 (MRFQNPFAFRP) the chain is Cytoplasmic. A helical transmembrane segment spans residues 12 to 32 (GPVSFWTTVIYLALVIPLIYV). Over 33–426 (HETVPPAPSD…AWAVFALRGL (394 aa)) the chain is Vacuolar. 2 N-linked (GlcNAc...) asparagine glycosylation sites follow: Asn50 and Asn142. Zn(2+)-binding residues include His207 and Asp219. Glu253 acts as the Proton acceptor in catalysis. 3 residues coordinate Zn(2+): Glu254, Glu279, and His352. Residues 427–447 (FAWSLTLLVATPLILVAITYI) form a helical membrane-spanning segment. Topologically, residues 448 to 482 (LARKDKYYFFSRDIKMHHDINDDPVVLGGWKGFLR) are cytoplasmic. The helical transmembrane segment at 483 to 503 (FPFALVFAGALTIASTLLLAK) threads the bilayer. Residues 504–511 (FNPLIIYS) are Vacuolar-facing. A helical membrane pass occupies residues 512–532 (SPYAVWSMTLSIFYFSFWLIM). Topologically, residues 533-545 (RGASFIRPSALHR) are cytoplasmic. Residues 546–566 (GYVLIWLFALGWGLQVVGAVA) form a helical membrane-spanning segment. Residues 567 to 573 (EDRLHIA) are Vacuolar-facing. The helical transmembrane segment at 574–594 (ALYATVFLQSAVFLALFISLL) threads the bilayer. The Cytoplasmic portion of the chain corresponds to 595 to 708 (EQFALLGKHD…WSGRLPSWTW (114 aa)). Residues 616 to 631 (RDISSHGTDHESRPQP) show a composition bias toward basic and acidic residues. Residues 616–666 (RDISSHGTDHESRPQPEEEPAQPEGDEDESEDATETTPLRANEPGYGSSTR) are disordered. Positions 632–649 (EEEPAQPEGDEDESEDAT) are enriched in acidic residues. The helical transmembrane segment at 709–729 (IIQFLLLAPVPVILFGNLGLV) threads the bilayer. Residues 730-745 (AMSALQMTGTDGGSLL) lie on the Vacuolar side of the membrane. The helical transmembrane segment at 746–766 (VPVLTLGIVSIFLLLPLTPFI) threads the bilayer. Residues 767-773 (HRVSHHV) are Cytoplasmic-facing. A helical membrane pass occupies residues 774–794 (PMFLLCVFAGTFIYNLVAFPF). At 795–1032 (SDSHRFKFYF…LVEVRKTYKV (238 aa)) the chain is on the vacuolar side. N-linked (GlcNAc...) asparagine glycans are attached at residues Asn812 and Asn884.

Belongs to the peptidase M28 family. Zn(2+) serves as cofactor.

It localises to the vacuole membrane. Functionally, may be involved in vacuolar sorting and osmoregulation. The chain is Vacuolar membrane protease from Fusarium vanettenii (strain ATCC MYA-4622 / CBS 123669 / FGSC 9596 / NRRL 45880 / 77-13-4) (Fusarium solani subsp. pisi).